We begin with the raw amino-acid sequence, 503 residues long: uncharacterized protein (503 aa).

A helical membrane pass occupies residues 26 to 46 (ILFLLLGLIILVNISINVATA). Disordered stretches follow at residues 155-176 (RPLSRGYPPFRKQPQGHKMSQM), 311-381 (YDAR…ESHE), 436-456 (QISDPTPPPTTFVPLSRNPGG), and 472-503 (VQENRGRASSLPPPSTSASRPSLHRSRTGKLN). Basic and acidic residues-rich tracts occupy residues 311-322 (YDARDQWRRGTE) and 334-346 (NPREVQGYRDHNS). Polar residues predominate over residues 348–367 (AHRQNFSSHTHSQPNHSPPQ). The segment covering 493 to 503 (SLHRSRTGKLN) has biased composition (basic residues).

The protein localises to the membrane. This is an uncharacterized protein from Mus musculus (Mouse).